The following is a 467-amino-acid chain: Asparagine--tRNA ligase (467 aa).

The protein belongs to the class-II aminoacyl-tRNA synthetase family. In terms of assembly, homodimer.

It localises to the cytoplasm. The catalysed reaction is tRNA(Asn) + L-asparagine + ATP = L-asparaginyl-tRNA(Asn) + AMP + diphosphate + H(+). This chain is Asparagine--tRNA ligase, found in Actinobacillus pleuropneumoniae serotype 5b (strain L20).